Here is a 576-residue protein sequence, read N- to C-terminus: Proline--tRNA ligase (576 aa).

This sequence belongs to the class-II aminoacyl-tRNA synthetase family. ProS type 1 subfamily. As to quaternary structure, homodimer.

Its subcellular location is the cytoplasm. It carries out the reaction tRNA(Pro) + L-proline + ATP = L-prolyl-tRNA(Pro) + AMP + diphosphate. In terms of biological role, catalyzes the attachment of proline to tRNA(Pro) in a two-step reaction: proline is first activated by ATP to form Pro-AMP and then transferred to the acceptor end of tRNA(Pro). As ProRS can inadvertently accommodate and process non-cognate amino acids such as alanine and cysteine, to avoid such errors it has two additional distinct editing activities against alanine. One activity is designated as 'pretransfer' editing and involves the tRNA(Pro)-independent hydrolysis of activated Ala-AMP. The other activity is designated 'posttransfer' editing and involves deacylation of mischarged Ala-tRNA(Pro). The misacylated Cys-tRNA(Pro) is not edited by ProRS. This Bordetella parapertussis (strain 12822 / ATCC BAA-587 / NCTC 13253) protein is Proline--tRNA ligase.